Consider the following 138-residue polypeptide: Thyrotropin subunit beta (138 aa).

The first 20 residues, 1-20 (MSAAVLLSVLFALACGQAAS), serve as a signal peptide directing secretion. 6 disulfides stabilise this stretch: Cys-22-Cys-72, Cys-36-Cys-87, Cys-39-Cys-125, Cys-47-Cys-103, Cys-51-Cys-105, and Cys-108-Cys-115. Residue Asn-43 is glycosylated (N-linked (GlcNAc...) asparagine). Positions 133-138 (LGGFSV) are excised as a propeptide.

Belongs to the glycoprotein hormones subunit beta family. As to quaternary structure, heterodimer of a common alpha chain and a unique beta chain which confers biological specificity to thyrotropin, lutropin, follitropin and gonadotropin.

The protein resides in the secreted. Indispensable for the control of thyroid structure and metabolism. This Mus musculus (Mouse) protein is Thyrotropin subunit beta (Tshb).